A 565-amino-acid chain; its full sequence is Phospholipase B-like protein C (565 aa).

Positions 1–21 are cleaved as a signal peptide; sequence MNKIIILISLFLNFLFGYVVC. Residues asparagine 53, asparagine 84, asparagine 118, asparagine 200, asparagine 201, asparagine 211, asparagine 266, asparagine 302, asparagine 406, and asparagine 485 are each glycosylated (N-linked (GlcNAc...) asparagine).

This sequence belongs to the phospholipase B-like family.

The protein resides in the secreted. Probable phospholipase. The polypeptide is Phospholipase B-like protein C (plbC) (Dictyostelium discoideum (Social amoeba)).